The primary structure comprises 513 residues: 2-isopropylmalate synthase (513 aa).

The region spanning 4-266 (IEFFDTSLRD…QSPLKLSETA (263 aa)) is the Pyruvate carboxyltransferase domain. D13, H201, H203, and N237 together coordinate Mn(2+). Residues 390 to 513 (ILDNVQIDGH…VEQISAHDGI (124 aa)) are regulatory domain.

This sequence belongs to the alpha-IPM synthase/homocitrate synthase family. LeuA type 1 subfamily. In terms of assembly, homodimer. Requires Mn(2+) as cofactor.

The protein resides in the cytoplasm. It carries out the reaction 3-methyl-2-oxobutanoate + acetyl-CoA + H2O = (2S)-2-isopropylmalate + CoA + H(+). It functions in the pathway amino-acid biosynthesis; L-leucine biosynthesis; L-leucine from 3-methyl-2-oxobutanoate: step 1/4. In terms of biological role, catalyzes the condensation of the acetyl group of acetyl-CoA with 3-methyl-2-oxobutanoate (2-ketoisovalerate) to form 3-carboxy-3-hydroxy-4-methylpentanoate (2-isopropylmalate). The chain is 2-isopropylmalate synthase from Lactococcus lactis subsp. lactis (strain IL1403) (Streptococcus lactis).